Here is a 274-residue protein sequence, read N- to C-terminus: 2,3,4,5-tetrahydropyridine-2,6-dicarboxylate N-succinyltransferase (274 aa).

Substrate is bound by residues R104 and D141.

This sequence belongs to the transferase hexapeptide repeat family. As to quaternary structure, homotrimer.

It is found in the cytoplasm. The catalysed reaction is (S)-2,3,4,5-tetrahydrodipicolinate + succinyl-CoA + H2O = (S)-2-succinylamino-6-oxoheptanedioate + CoA. The protein operates within amino-acid biosynthesis; L-lysine biosynthesis via DAP pathway; LL-2,6-diaminopimelate from (S)-tetrahydrodipicolinate (succinylase route): step 1/3. The chain is 2,3,4,5-tetrahydropyridine-2,6-dicarboxylate N-succinyltransferase from Shewanella sp. (strain ANA-3).